A 221-amino-acid chain; its full sequence is MKTPGHQRVKTARRRTAASTRWLERQLNDPYVQKAQAEGYRSRAAFKLIELDERFSLLKNARRIIDLGIAPGGWSQVARKKAPQAKIVGIDLLEAAPIEGVTIFQNDFTDPEAQKKLIEALGGAADLVLSDMAANTIGHAQTDHLRTMALVEEAAVFASETLREGGSFVAKVLAGGADKDLVALLKRLFGQVKHAKPPASRRESSEWYVIAQNFRGEAYQG.

S-adenosyl-L-methionine is bound by residues Gly72, Trp74, Asp91, Asp107, and Asp131. The active-site Proton acceptor is Lys171.

The protein belongs to the class I-like SAM-binding methyltransferase superfamily. RNA methyltransferase RlmE family.

It is found in the cytoplasm. It catalyses the reaction uridine(2552) in 23S rRNA + S-adenosyl-L-methionine = 2'-O-methyluridine(2552) in 23S rRNA + S-adenosyl-L-homocysteine + H(+). In terms of biological role, specifically methylates the uridine in position 2552 of 23S rRNA at the 2'-O position of the ribose in the fully assembled 50S ribosomal subunit. The chain is Ribosomal RNA large subunit methyltransferase E from Zymomonas mobilis subsp. mobilis (strain ATCC 31821 / ZM4 / CP4).